The following is a 951-amino-acid chain: Zinc fingers and homeoboxes protein 3 (951 aa).

A disordered region spans residues 1–66 (MASKRKSTTP…SSTDGSALAN (66 aa)). Positions 1–107 (MASKRKSTTP…SEHTDFNKDP (107 aa)) are required for nuclear localization. Over residues 42–58 (PSEAPDASSEAAPNPSS) the composition is skewed to low complexity. C2H2-type zinc fingers lie at residues 77-100 (YCCK…NSEH) and 109-132 (FVCT…AKCH). Residues 227-252 (TFINGAAPGSQASAKSTKPPPAANGP) are disordered. The segment at 238 to 483 (ASAKSTKPPP…LLTACPSITS (246 aa)) is required for homodimerization and interaction with NFYA. The segment at 299-497 (LSSIPTYNAA…DANIYKNKKS (199 aa)) is required for repressor activity. 2 consecutive DNA-binding regions (homeobox) follow at residues 300-359 (SSIP…GISW) and 489-548 (ANIY…RNLK). The tract at residues 492 to 550 (YKNKKSHEQLSALKGSFCRNQFPGQSEVEHLTKVTGLSTREVRKWFSDRRYHCRNLKGS) is required for nuclear localization. A Phosphoserine modification is found at Ser599. A DNA-binding region (homeobox 3) is located at residues 607 to 666 (TPTKYKERAPEQLRVLENSFAQNPLPPEEELDRLRSETKMTRREIDGWFSERRKKVNTEE). Positions 662–676 (VNTEETKKADGHMPK) are enriched in basic and acidic residues. The interval 662 to 690 (VNTEETKKADGHMPKEEEEGAEQEGRDEE) is disordered. A compositionally biased stretch (acidic residues) spans 677–690 (EEEEGAEQEGRDEE). A phosphoserine mark is found at Ser703 and Ser718. 2 consecutive DNA-binding regions (homeobox) follow at residues 759 to 818 (PSKV…KNGQ) and 830 to 889 (FPPG…TRAV). Residues 916 to 951 (SELSENSESWEPSAPEASSEPFDTSSPQSGRQLEAD) are disordered. Residues 919 to 936 (SENSESWEPSAPEASSEP) are compositionally biased toward low complexity. 2 positions are modified to phosphoserine: Ser922 and Ser941. The span at 937–951 (FDTSSPQSGRQLEAD) shows a compositional bias: polar residues.

It belongs to the ZHX family. In terms of assembly, homodimer (via homeobox domain 1). Heterodimer with ZHX1 (via homeobox domain 1). Heterodimer with ZHX2 (via homeobox domain 1). Heterodimerization with ZHX1 is a prerequisite for repressor activity. Interacts with NFYA. Ubiquitously expressed.

The protein localises to the nucleus. Its function is as follows. Acts as a transcriptional repressor. Involved in the early stages of mesenchymal stem cell (MSC) osteogenic differentiation. Is a regulator of podocyte gene expression during primary glomerula disease. Binds to promoter DNA. This chain is Zinc fingers and homeoboxes protein 3 (Zhx3), found in Mus musculus (Mouse).